A 1304-amino-acid chain; its full sequence is NAD-dependent protein deacetylase Sir2B (1304 aa).

The Deacetylase sirtuin-type domain maps to 28 to 466 (TEEEKKKVKE…LISIHNIKMK (439 aa)). NAD(+)-binding positions include 53 to 72 (GAGI…TGIW) and 274 to 277 (QNID). The Proton acceptor role is filled by histidine 294. Residues cysteine 302, cysteine 305, cysteine 327, and cysteine 330 each coordinate Zn(2+). NAD(+)-binding positions include 371–373 (GSS), 399–401 (NYQ), and valine 417. Disordered regions lie at residues 545-585 (EHNN…SSSI), 749-827 (KVKS…DKDN), and 1154-1203 (EIKY…DDNN). Low complexity-rich tracts occupy residues 548–585 (NNNN…SSSI), 756–806 (NNNN…ISDH), and 1182–1203 (DDNN…DDNN).

It belongs to the sirtuin family. Class IV subfamily. Zn(2+) serves as cofactor.

It carries out the reaction N(6)-acetyl-L-lysyl-[protein] + NAD(+) + H2O = 2''-O-acetyl-ADP-D-ribose + nicotinamide + L-lysyl-[protein]. Regulates the expression of the surface antigen-coding var genes central to the malaria pathogenesis. Cooperates with Sir2A to mediate silencing and mutual exclusive expression of only 1 of the 60 subtelomeric var genes at a time, coding for functionally different but epitopically variant versions of the erythrocyte membrane protein 1 (PfEMP1) molecule, to evade the detection by host immune surveillance. The chain is NAD-dependent protein deacetylase Sir2B from Plasmodium falciparum (isolate 3D7).